A 514-amino-acid chain; its full sequence is MSTFIRGPICGTDNCPSRLWRIIDGRRTCQYGHVMEGDVEFNDDEDDLNGLGAGVITRRLNLTTNATGSFQSSQLTNSQLLQQQQRQSHKKFKKLIGHEAKLLFLKSFQFILKRQIRWLITEMRFPKEFEHVAKIIWLKILKTINDQPQEELKLQLHMTSTISILYLASTHLSLPVYTCDYIKWICTAKMPYFQASEILPKSWRIQLPNYYVSILEGSISPFNGQLYNKIALTCGMIHFKEFFNSEISCQGLLLKLVMQCALPPEFYFYTKQVIEFEETDIRNLTLWERTDERHTGRVSNHAELRVLSYFMLTINWMLSFDRDRQYPLKWILSLTESLTQRTTTSESIGRNIVKVVYPDKPTSSDYFQWSEEETLEFLKWMEKQFLPTQTKSLHNENGSMEMTIDQKIARRKLYKIFPLDREANHDGEFNDSTHQLTFIEDLQERYAKQTPFFESNKIRDSLNYQEANPPARKEAIGRLLTHIASQLLVDFAISKEQLKDCISRIKNACLHRMN.

An RRN7-type zinc finger spans residues 3 to 36; it reads TFIRGPICGTDNCPSRLWRIIDGRRTCQYGHVME. Residues C10, C15, C29, and H33 each coordinate Zn(2+). Residues 37–66 are B-reader; it reads GDVEFNDDEDDLNGLGAGVITRRLNLTTNA. The tract at residues 67–101 is B-linker; sequence TGSFQSSQLTNSQLLQQQQRQSHKKFKKLIGHEAK. Positions 102–210 are N-terminal cyclin fold; the sequence is LLFLKSFQFI…KSWRIQLPNY (109 aa). Positions 211-320 are C-terminal cyclin fold; sequence YVSILEGSIS…MLTINWMLSF (110 aa).

The protein belongs to the RRN7/TAF1B family. In terms of assembly, component of the core factor (CF) complex, which consists of RRN6, RRN7 and RRN11. The CF heterotrimer may further dimerize to form a hexamer. RRN7 interacts with RRN6, RRN11, SPT15 and RRN9.

The protein resides in the nucleus. It is found in the nucleolus. In terms of biological role, component of RNA polymerase I core factor complex (CF) that acts as a SUA7/TFIIB-like factor and plays a key role in multiple steps during transcription initiation such as pre-initiation complex (PIC) assembly and postpolymerase recruitment events in polymerase I (Pol I) transcription. Binds rDNA promoters and plays a role in Pol I recruitment. After binding of UAF (upstream activation factor) to an upstream element of the promoter, CF is recruited in a SPT15/TBP-dependent manner to form a pre-initiation complex. This is RNA polymerase I-specific transcription initiation factor RRN7 (RRN7) from Saccharomyces cerevisiae (strain ATCC 204508 / S288c) (Baker's yeast).